The following is a 261-amino-acid chain: Cytochrome c oxidase subunit 3 (261 aa).

Topologically, residues 1–15 are mitochondrial matrix; the sequence is MTHQTHAYHMVNPSP. A helical membrane pass occupies residues 16–34; that stretch reads WPLTGALSALLLTSGLIMW. Residues 35–40 lie on the Mitochondrial intermembrane side of the membrane; that stretch reads FHFNSF. Residues 41–66 form a helical membrane-spanning segment; the sequence is LLVIIGLTCMLLTMYQWWRDIVREGT. Residues 67-72 are Mitochondrial matrix-facing; the sequence is FQGHHT. Residues 73–105 traverse the membrane as a helical segment; it reads PVVQKGLRYGMVLFIVSEVFFFLGFFWAFYHSS. At 106-128 the chain is on the mitochondrial intermembrane side; sequence LAPTPELGGCWPPTGIHPLNPLE. A helical membrane pass occupies residues 129–152; it reads VPLLNTSILLASGVSITWAHHSLM. At 153 to 155 the chain is on the mitochondrial matrix side; it reads EGN. Residues 156-183 traverse the membrane as a helical segment; sequence RKQMIQALSITILLGIYFTILQASEYYE. Residues 184–190 lie on the Mitochondrial intermembrane side of the membrane; that stretch reads SSFTISD. A helical transmembrane segment spans residues 191–223; the sequence is GVYGSTFFVATGFHGLHVIIGTTFLIVCLLRQF. Residues 224-232 are Mitochondrial matrix-facing; sequence NFHFTSTHH. The helical transmembrane segment at 233-256 threads the bilayer; it reads FGFEAAAWYWHFVDVVWLFLYVSI. At 257–261 the chain is on the mitochondrial intermembrane side; that stretch reads YWWGS.

The protein belongs to the cytochrome c oxidase subunit 3 family. In terms of assembly, component of the cytochrome c oxidase (complex IV, CIV), a multisubunit enzyme composed of 14 subunits. The complex is composed of a catalytic core of 3 subunits MT-CO1, MT-CO2 and MT-CO3, encoded in the mitochondrial DNA, and 11 supernumerary subunits COX4I, COX5A, COX5B, COX6A, COX6B, COX6C, COX7A, COX7B, COX7C, COX8 and NDUFA4, which are encoded in the nuclear genome. The complex exists as a monomer or a dimer and forms supercomplexes (SCs) in the inner mitochondrial membrane with NADH-ubiquinone oxidoreductase (complex I, CI) and ubiquinol-cytochrome c oxidoreductase (cytochrome b-c1 complex, complex III, CIII), resulting in different assemblies (supercomplex SCI(1)III(2)IV(1) and megacomplex MCI(2)III(2)IV(2)).

Its subcellular location is the mitochondrion inner membrane. The catalysed reaction is 4 Fe(II)-[cytochrome c] + O2 + 8 H(+)(in) = 4 Fe(III)-[cytochrome c] + 2 H2O + 4 H(+)(out). Component of the cytochrome c oxidase, the last enzyme in the mitochondrial electron transport chain which drives oxidative phosphorylation. The respiratory chain contains 3 multisubunit complexes succinate dehydrogenase (complex II, CII), ubiquinol-cytochrome c oxidoreductase (cytochrome b-c1 complex, complex III, CIII) and cytochrome c oxidase (complex IV, CIV), that cooperate to transfer electrons derived from NADH and succinate to molecular oxygen, creating an electrochemical gradient over the inner membrane that drives transmembrane transport and the ATP synthase. Cytochrome c oxidase is the component of the respiratory chain that catalyzes the reduction of oxygen to water. Electrons originating from reduced cytochrome c in the intermembrane space (IMS) are transferred via the dinuclear copper A center (CU(A)) of subunit 2 and heme A of subunit 1 to the active site in subunit 1, a binuclear center (BNC) formed by heme A3 and copper B (CU(B)). The BNC reduces molecular oxygen to 2 water molecules using 4 electrons from cytochrome c in the IMS and 4 protons from the mitochondrial matrix. In Osphranter robustus (Wallaroo), this protein is Cytochrome c oxidase subunit 3 (MT-CO3).